A 401-amino-acid polypeptide reads, in one-letter code: Chalcone synthase 2 (401 aa).

The active site involves cysteine 168.

The protein belongs to the thiolase-like superfamily. Chalcone/stilbene synthases family.

The catalysed reaction is (E)-4-coumaroyl-CoA + 3 malonyl-CoA + 3 H(+) = 2',4,4',6'-tetrahydroxychalcone + 3 CO2 + 4 CoA. It participates in secondary metabolite biosynthesis; flavonoid biosynthesis. In terms of biological role, the primary product of this enzyme is 4,2',4',6'-tetrahydroxychalcone (also termed naringenin-chalcone or chalcone) which can under specific conditions spontaneously isomerize into naringenin. The polypeptide is Chalcone synthase 2 (CHS2) (Sorghum bicolor (Sorghum)).